An 86-amino-acid polypeptide reads, in one-letter code: Small ribosomal subunit protein bS16 (86 aa).

It belongs to the bacterial ribosomal protein bS16 family.

This is Small ribosomal subunit protein bS16 from Borreliella burgdorferi (strain ATCC 35210 / DSM 4680 / CIP 102532 / B31) (Borrelia burgdorferi).